Reading from the N-terminus, the 177-residue chain is Large ribosomal subunit protein uL6 (177 aa).

The segment at 151–177 is disordered; the sequence is KRPPEPYKGKGVKYADEHIRRKEGKKS. Residues 152–177 are compositionally biased toward basic and acidic residues; it reads RPPEPYKGKGVKYADEHIRRKEGKKS.

The protein belongs to the universal ribosomal protein uL6 family. Part of the 50S ribosomal subunit.

This protein binds to the 23S rRNA, and is important in its secondary structure. It is located near the subunit interface in the base of the L7/L12 stalk, and near the tRNA binding site of the peptidyltransferase center. This chain is Large ribosomal subunit protein uL6, found in Fusobacterium nucleatum subsp. nucleatum (strain ATCC 25586 / DSM 15643 / BCRC 10681 / CIP 101130 / JCM 8532 / KCTC 2640 / LMG 13131 / VPI 4355).